We begin with the raw amino-acid sequence, 160 residues long: Transcription antitermination protein NusB (160 aa).

The protein belongs to the NusB family.

Functionally, involved in transcription antitermination. Required for transcription of ribosomal RNA (rRNA) genes. Binds specifically to the boxA antiterminator sequence of the ribosomal RNA (rrn) operons. The sequence is that of Transcription antitermination protein NusB from Allorhizobium ampelinum (strain ATCC BAA-846 / DSM 112012 / S4) (Agrobacterium vitis (strain S4)).